Here is a 30-residue protein sequence, read N- to C-terminus: Cyclotide mela-5 (30 aa).

The cyclopeptide (Gly-Asp) cross-link spans 1–30; it reads GSAIACGESCFKFKCYTPGCSCSYPICKKD. Intrachain disulfides connect Cys-6/Cys-20, Cys-10/Cys-22, and Cys-15/Cys-27.

Post-translationally, this is a cyclic peptide. Contains 3 disulfide bonds.

Its function is as follows. Probably participates in a plant defense mechanism (Potential). Binds to and induces leakage in phospholipd membranes, particularly ones containing 1-palmitoyl-2-oleophosphatidylethanolamine (POPE). This is Cyclotide mela-5 from Melicytus latifolius (Norfolk Island mahoe).